Consider the following 982-residue polypeptide: Protein cramped (982 aa).

Disordered stretches follow at residues 1–37 (MEEL…GGGA), 71–111 (QKMK…GSGK), 323–349 (SLPS…ASLD), 407–456 (NKRL…SSGD), and 822–851 (GTSS…QEPG). Positions 7 to 20 (QPPPPPLTQPPPPS) are enriched in pro residues. Over residues 21-30 (SSVSIEEPLP) the composition is skewed to low complexity. The segment covering 86 to 98 (SEREPNKKEEKAA) has biased composition (basic and acidic residues). Residues 100–111 (KTPSQLKTGSGK) are compositionally biased toward polar residues. The SANT domain occupies 109–173 (SGKTTWTNVE…HYYQTHHKIC (65 aa)). Residues 410–425 (LRTESGSEKRSPETKK) are compositionally biased toward basic and acidic residues. A phosphoserine mark is found at Ser431 and Ser437. Residues 822–833 (GTSSAGISTSGS) show a composition bias toward low complexity.

Belongs to the cramped family. As to expression, ubiquitously expressed throughout embryonic development. High expression is detected in CNS and gonads.

It is found in the nucleus. Its function is as follows. Polycomb group (Pc-G) genes are needed to maintain expression patterns of the homeotic selector genes of the Antennapedia (Antp-C) and Bithorax (Bx-C) complexes, and hence for the maintenance of segmental determination. Can act as a modifier of position effect variegation (PEV). This is Protein cramped (crm) from Drosophila melanogaster (Fruit fly).